The sequence spans 597 residues: Probable potassium transport system protein Kup 1 (597 aa).

10 helical membrane-spanning segments follow: residues glycine 23–leucine 43, leucine 72–threonine 92, valine 98–isoleucine 118, alanine 143–tyrosine 163, isoleucine 174–alanine 194, alanine 226–phenylalanine 246, leucine 273–phenylalanine 293, tyrosine 303–tryptophan 323, phenylalanine 329–serine 349, and phenylalanine 353–threonine 373.

It belongs to the HAK/KUP transporter (TC 2.A.72) family.

It localises to the cell membrane. The catalysed reaction is K(+)(in) + H(+)(in) = K(+)(out) + H(+)(out). Functionally, transport of potassium into the cell. Likely operates as a K(+):H(+) symporter. The protein is Probable potassium transport system protein Kup 1 (kup1) of Bifidobacterium longum (strain NCC 2705).